A 218-amino-acid chain; its full sequence is Superoxide dismutase [Mn], mitochondrial (218 aa).

Residues His27, His84, Asp174, and His178 each coordinate Mn(2+).

It belongs to the iron/manganese superoxide dismutase family. As to quaternary structure, homotetramer. Mn(2+) serves as cofactor.

Its subcellular location is the mitochondrion matrix. The catalysed reaction is 2 superoxide + 2 H(+) = H2O2 + O2. Its function is as follows. Destroys superoxide anion radicals which are normally produced within the cells and which are toxic to biological systems. The sequence is that of Superoxide dismutase [Mn], mitochondrial (SODA) from Chlamydomonas reinhardtii (Chlamydomonas smithii).